Reading from the N-terminus, the 365-residue chain is Geranylgeranyl pyrophosphate synthase (365 aa).

Positions 1–11 (MKPLPSTNGKV) are enriched in polar residues. The interval 1-36 (MKPLPSTNGKVNGNGKHHDSSLSSTSSTSSSSSSDT) is disordered. The span at 21-34 (SLSSTSSTSSSSSS) shows a compositional bias: low complexity. Positions 78, 81, and 110 each coordinate isopentenyl diphosphate. Aspartate 117 and aspartate 121 together coordinate Mg(2+). Arginine 126 contributes to the dimethylallyl diphosphate binding site. Residue arginine 127 coordinates isopentenyl diphosphate. 3 residues coordinate dimethylallyl diphosphate: lysine 211, threonine 212, and glutamine 247. Aspartate 250 is a binding site for Mg(2+). Asparagine 254, lysine 263, and lysine 273 together coordinate dimethylallyl diphosphate.

The protein belongs to the FPP/GGPP synthase family. It depends on Mg(2+) as a cofactor.

It catalyses the reaction isopentenyl diphosphate + dimethylallyl diphosphate = (2E)-geranyl diphosphate + diphosphate. The catalysed reaction is isopentenyl diphosphate + (2E)-geranyl diphosphate = (2E,6E)-farnesyl diphosphate + diphosphate. The enzyme catalyses isopentenyl diphosphate + (2E,6E)-farnesyl diphosphate = (2E,6E,10E)-geranylgeranyl diphosphate + diphosphate. Its function is as follows. Geranylgeranyl pyrophosphate synthase that catalyzes the trans-addition of the three molecules of IPP onto DMAPP to form geranylgeranyl pyrophosphate. Does not show any monoterpene nor sesquiterpene synthase activity. The polypeptide is Geranylgeranyl pyrophosphate synthase (Melampsora lini (Rust fungus)).